Here is a 374-residue protein sequence, read N- to C-terminus: uncharacterized protein (374 aa).

Residues 27 to 49 (AISPILALLIVLGVTIVVGAVFY) traverse the membrane as a helical segment.

The protein localises to the membrane. This is an uncharacterized protein from Methanocaldococcus jannaschii (strain ATCC 43067 / DSM 2661 / JAL-1 / JCM 10045 / NBRC 100440) (Methanococcus jannaschii).